Reading from the N-terminus, the 354-residue chain is Homoserine O-succinyltransferase (354 aa).

The active-site Acyl-thioester intermediate is the Cys146. Lys167 and Ser196 together coordinate substrate. The active-site Proton acceptor is the His239. Residue Glu241 is part of the active site. Arg253 lines the substrate pocket.

The protein belongs to the MetA family.

The protein resides in the cytoplasm. The enzyme catalyses L-homoserine + succinyl-CoA = O-succinyl-L-homoserine + CoA. The protein operates within amino-acid biosynthesis; L-methionine biosynthesis via de novo pathway; O-succinyl-L-homoserine from L-homoserine: step 1/1. In terms of biological role, transfers a succinyl group from succinyl-CoA to L-homoserine, forming succinyl-L-homoserine. The chain is Homoserine O-succinyltransferase from Methylobacter tundripaludum (strain ATCC BAA-1195 / DSM 17260 / SV96).